We begin with the raw amino-acid sequence, 166 residues long: Podoplanin (166 aa).

An N-terminal signal peptide occupies residues 1 to 22; the sequence is MWTAPVLLWVLGSVWFWDSAQG. The Extracellular segment spans residues 23–135; that stretch reads GAIGALEDDL…KKDGLAVVTL (113 aa). O-linked (GalNAc...) threonine glycans are attached at residues threonine 34, threonine 52, threonine 55, and threonine 56. The span at 54–63 shows a compositional bias: basic and acidic residues; sequence DTTGELDKST. Positions 54-124 are disordered; it reads DTTGELDKST…DNAGGETQTT (71 aa). An O-linked (GalNAc...) serine glycan is attached at serine 62. O-linked (GalNAc...) threonine glycans are attached at residues threonine 63, threonine 71, and threonine 80. A glycan (O-linked (GalNAc...) serine) is linked at serine 81. Residue threonine 83 is glycosylated (O-linked (GalNAc...) threonine). Residue serine 84 is glycosylated (O-linked (GalNAc...) serine). The span at 84 to 93 shows a compositional bias: basic and acidic residues; it reads SDHDHKEHES. Residues threonine 94, threonine 95, threonine 96, threonine 101, threonine 105, threonine 109, and threonine 110 are each glycosylated (O-linked (GalNAc...) threonine). The span at 94–103 shows a compositional bias: polar residues; it reads TTTVKAVTSH. The span at 104–114 shows a compositional bias: basic and acidic residues; it reads STDKKTTHPNR. A helical transmembrane segment spans residues 136 to 156; the sequence is VGIIIGVLLAIGFIGGIIIVV. The segment at 137-141 is requires for dimerization and lipid rafts association; that stretch reads GIIIG. The Cytoplasmic portion of the chain corresponds to 157–166; sequence MRKISGRFSP. The tract at residues 158–159 is requires for interaction with MSN and EZR; the sequence is RK.

The protein belongs to the podoplanin family. Homodimer. Interacts with CLEC1B; the interaction is independent of CLEC1B glycosylation and activates CLEC1B; the interaction is dependent of sialic acid on O-glycans. Interacts with CD9; this interaction is homophilic and attenuates platelet aggregation and pulmonary metastasis induced by PDPN. Interacts with LGALS8; the interaction is glycosylation-dependent; may participate in connection of the lymphatic endothelium to the surrounding extracellular matrix. Interacts with HSPA9. Interacts (via extracellular domain) with CD44; this interaction is required for PDPN-mediated directional migration and regulation of lamellipodia extension/stabilization during cell spreading and migration. Interacts (via cytoplasmic domain) with MSN and EZR; activates RHOA and promotes epithelial-mesenchymal transition. Interacts with CCL21; relocalized PDPN to the basolateral membrane. Post-translationally, extensively O-glycosylated. Contains sialic acid residues. O-glycosylation is necessary for platelet aggregation activity. Disialylated at Thr-52; sialic acid is critical for platelet-aggregating activity and for CLEC1B interaction. The N-terminus is blocked. As to expression, in adult kidney, expressed on the urinary surface and foot processes of podocytes and in parietal epithelial cells of Bowman's capsule where it is localized to luminal surfaces. In lung, expressed exclusively on luminal surfaces of type I alveolar epithelial cells and pleural mesothelial cells. Not expressed in type II alveolar cells. In bone, expressed in osteocytes and osteoblasts. In spleen, liver, stomach and intestine, expressed in mesoepithelium. Also expressed in thymic epithelial cells, choroid plexus and leptomeninges.

It is found in the membrane. It localises to the cell projection. The protein resides in the lamellipodium membrane. The protein localises to the filopodium membrane. Its subcellular location is the microvillus membrane. It is found in the ruffle membrane. It localises to the membrane raft. The protein resides in the apical cell membrane. The protein localises to the basolateral cell membrane. Its subcellular location is the invadopodium. Its function is as follows. Mediates effects on cell migration and adhesion through its different partners. During development plays a role in blood and lymphatic vessels separation by binding CLEC1B, triggering CLEC1B activation in platelets and leading to platelet activation and/or aggregation. Interaction with CD9, on the contrary, attenuates platelet aggregation and pulmonary metastasis induced by PDPN. Mediates effects on cell migration and adhesion through its different partners. Through MSN or EZR interaction promotes epithelial-mesenchymal transition (EMT) leading to ERZ phosphorylation and triggering RHOA activation leading to cell migration increase and invasiveness. Interaction with CD44 promotes directional cell migration in epithelial and tumor cells. In lymph nodes (LNs), controls fibroblastic reticular cells (FRCs) adhesion to the extracellular matrix (ECM) and contraction of the actomyosin by maintaining ERM proteins (EZR; MSN and RDX) and MYL9 activation through association with unknown transmembrane proteins. Engagement of CLEC1B by PDPN promotes FRCs relaxation by blocking lateral membrane interactions leading to reduction of ERM proteins (EZR; MSN and RDX) and MYL9 activation. Through binding with LGALS8 may participate in connection of the lymphatic endothelium to the surrounding extracellular matrix. In keratinocytes, induces changes in cell morphology showing an elongated shape, numerous membrane protrusions, major reorganization of the actin cytoskeleton, increased motility and decreased cell adhesion. Controls invadopodia stability and maturation leading to efficient degradation of the extracellular matrix (ECM) in tumor cells through modulation of RHOC activity in order to activate ROCK1/ROCK2 and LIMK1/LIMK2 and inactivation of CFL1. Required for normal lung cell proliferation and alveolus formation at birth. Does not function as a water channel or as a regulator of aquaporin-type water channels. Does not have any effect on folic acid or amino acid transport. In Rattus norvegicus (Rat), this protein is Podoplanin.